A 440-amino-acid chain; its full sequence is 23S rRNA (uracil(1939)-C(5))-methyltransferase RlmD (440 aa).

A TRAM domain is found at 11 to 69; the sequence is STLDTKHQPVTIERLDHQGSGLAFLHKKPLFVDGALPGEEVLIQLTENKSKYARGQLIK. The [4Fe-4S] cluster site is built by cysteine 82, cysteine 88, cysteine 91, and cysteine 169. Residues glutamine 272, phenylalanine 301, asparagine 306, glutamate 322, asparagine 349, and aspartate 370 each contribute to the S-adenosyl-L-methionine site. Catalysis depends on cysteine 396, which acts as the Nucleophile.

It belongs to the class I-like SAM-binding methyltransferase superfamily. RNA M5U methyltransferase family. RlmD subfamily.

The enzyme catalyses uridine(1939) in 23S rRNA + S-adenosyl-L-methionine = 5-methyluridine(1939) in 23S rRNA + S-adenosyl-L-homocysteine + H(+). Functionally, catalyzes the formation of 5-methyl-uridine at position 1939 (m5U1939) in 23S rRNA. This chain is 23S rRNA (uracil(1939)-C(5))-methyltransferase RlmD, found in Vibrio cholerae serotype O1 (strain M66-2).